The following is a 553-amino-acid chain: uncharacterized protein (553 aa).

In terms of domain architecture, SWIB/MDM2 spans 26 to 109 (RFEFVGWGSR…YDLLEKHYKE (84 aa)). The 126-residue stretch at 150 to 275 (AIVSDNIKLL…KAKKLHKDQT (126 aa)) folds into the Plus3 domain. Disordered stretches follow at residues 335 to 357 (QNPE…SESP) and 447 to 482 (PVNN…ETLD). The span at 343–353 (EAHKSDNEQRL) shows a compositional bias: basic and acidic residues. Residues 447–461 (PVNNVDNGSQVQPNP) show a composition bias toward polar residues. The segment covering 466 to 480 (ELSDDDEDDNGDGET) has biased composition (acidic residues). The region spanning 497–551 (KLNWLYKDPQGLVQGPFSLTQLKAWSDAEYFTKQFRVWMTGESMESAVLLTDVLR) is the GYF domain.

This is an uncharacterized protein from Arabidopsis thaliana (Mouse-ear cress).